Here is a 510-residue protein sequence, read N- to C-terminus: Glutamyl-tRNA(Gln) amidotransferase subunit A (510 aa).

Residues Lys-75 and Ser-150 each act as charge relay system in the active site. Catalysis depends on Ser-174, which acts as the Acyl-ester intermediate. The tract at residues 471–510 (DWHKRRPPLGQPSVKEGQGSDPGQPQAKRRSGKRSKKSKS) is disordered. Over residues 497-510 (AKRRSGKRSKKSKS) the composition is skewed to basic residues.

It belongs to the amidase family. GatA subfamily. As to quaternary structure, heterotrimer of A, B and C subunits.

It carries out the reaction L-glutamyl-tRNA(Gln) + L-glutamine + ATP + H2O = L-glutaminyl-tRNA(Gln) + L-glutamate + ADP + phosphate + H(+). Allows the formation of correctly charged Gln-tRNA(Gln) through the transamidation of misacylated Glu-tRNA(Gln) in organisms which lack glutaminyl-tRNA synthetase. The reaction takes place in the presence of glutamine and ATP through an activated gamma-phospho-Glu-tRNA(Gln). The protein is Glutamyl-tRNA(Gln) amidotransferase subunit A of Synechococcus sp. (strain JA-2-3B'a(2-13)) (Cyanobacteria bacterium Yellowstone B-Prime).